The following is a 140-amino-acid chain: Small ribosomal subunit protein uS12 (140 aa).

Asp102 carries the 3-methylthioaspartic acid modification.

This sequence belongs to the universal ribosomal protein uS12 family. In terms of assembly, part of the 30S ribosomal subunit. Contacts proteins S8 and S17. May interact with IF1 in the 30S initiation complex.

In terms of biological role, with S4 and S5 plays an important role in translational accuracy. Functionally, interacts with and stabilizes bases of the 16S rRNA that are involved in tRNA selection in the A site and with the mRNA backbone. Located at the interface of the 30S and 50S subunits, it traverses the body of the 30S subunit contacting proteins on the other side and probably holding the rRNA structure together. The combined cluster of proteins S8, S12 and S17 appears to hold together the shoulder and platform of the 30S subunit. This is Small ribosomal subunit protein uS12 from Geobacillus sp. (strain WCH70).